A 277-amino-acid polypeptide reads, in one-letter code: MHIRFTKMHGLGNDFVVIDATRTPVDLTPARVKAIADRHFGVGCDQLLVVEPPGSDEVDFRYRIFNADGGEVEQCGNGARCFVRFVHDKGLTDKREIRVETRAGVIAPALRPDGLVSVDMGVPELSPARIPFVSDSDAWVQPLQLAEDTVAITAVSMGNPHAVQVVADVDTAPVARQGAEIECHPRFPARVNAGFMQVVDAGHIRLRVFERGAGETLACGTGACAAVVAGIGRGLLVSPVRVETRGGELEIAWAGPGTPVVMTGPAVTVFEGELELP.

Positions 13, 46, and 66 each coordinate substrate. The active-site Proton donor is cysteine 75. Substrate-binding positions include 76 to 77 (GN), asparagine 159, asparagine 192, and 210 to 211 (ER). The active-site Proton acceptor is cysteine 219. A substrate-binding site is contributed by 220–221 (GT).

This sequence belongs to the diaminopimelate epimerase family. As to quaternary structure, homodimer.

The protein resides in the cytoplasm. It carries out the reaction (2S,6S)-2,6-diaminopimelate = meso-2,6-diaminopimelate. Its pathway is amino-acid biosynthesis; L-lysine biosynthesis via DAP pathway; DL-2,6-diaminopimelate from LL-2,6-diaminopimelate: step 1/1. Its function is as follows. Catalyzes the stereoinversion of LL-2,6-diaminopimelate (L,L-DAP) to meso-diaminopimelate (meso-DAP), a precursor of L-lysine and an essential component of the bacterial peptidoglycan. This chain is Diaminopimelate epimerase, found in Azoarcus sp. (strain BH72).